A 1157-amino-acid polypeptide reads, in one-letter code: ATP-dependent helicase/deoxyribonuclease subunit B (1157 aa).

The region spanning 1-275 is the UvrD-like helicase ATP-binding domain; it reads MTLHAYLGRA…QYFNQLYRFN (275 aa). 8-15 contributes to the ATP binding site; it reads GRAGTGKS. The 315-residue stretch at 269–583 folds into the UvrD-like helicase C-terminal domain; that stretch reads NQLYRFNNQD…SIGTMDLAKV (315 aa). [4Fe-4S] cluster-binding residues include Cys-784, Cys-1112, Cys-1115, and Cys-1121.

This sequence belongs to the helicase family. AddB/RexB type 1 subfamily. Heterodimer of AddA and AddB. The cofactor is Mg(2+). It depends on [4Fe-4S] cluster as a cofactor.

Functionally, the heterodimer acts as both an ATP-dependent DNA helicase and an ATP-dependent, dual-direction single-stranded exonuclease. Recognizes the chi site generating a DNA molecule suitable for the initiation of homologous recombination. The AddB subunit has 5' -&gt; 3' nuclease activity but not helicase activity. The protein is ATP-dependent helicase/deoxyribonuclease subunit B of Staphylococcus aureus (strain JH9).